Consider the following 503-residue polypeptide: EZH inhibitory protein (503 aa).

Positions 1–16 (MATQSDMEKEQKHQQD) are enriched in basic and acidic residues. Disordered regions lie at residues 1–72 (MATQ…AAAA), 97–462 (HSDR…RSIS), and 483–503 (VPPE…PPEP). Over residues 41-72 (PAASVTTVSSQASPSGGAALSSSTAGSSAAAA) the composition is skewed to low complexity. Basic and acidic residues predominate over residues 97 to 107 (HSDRQDCRSPH). Over residues 184–197 (YPCSGASTSSQATQ) the composition is skewed to polar residues. The residue at position 259 (serine 259) is a Phosphoserine. A compositionally biased stretch (low complexity) spans 345 to 366 (LRSRSTQQRSALLSRRSLSGSA). The interval 401 to 409 (WHAVRMRAS) is sufficient for interaction with EZH2. A necessary and sufficient for inhibition of PRC2/EED-EZH1 and PRC2/EED-EZH2 complex activity region spans residues 403-423 (AVRMRASSPSPPGRFFLPIPQ). The segment covering 428–453 (SSSSSYASNSSSPSRSPGLSPSSPSP) has biased composition (low complexity).

Interacts with PRC2/EED-EZH1 complex member EZH1 and with PRC2/EED-EZH2 complex member EZH2; the interaction blocks EZH1/EZH2 methyltransferase activity. Interacts (via C-terminus) with SUZ12 which is a member of the PRC2/EED-EZH1 and PRC2/EED-EZH2 complexes. As to expression, in testis, detected in male germ cells inside the seminiferous tubules, especially in spermatogonia and round spermatids (at protein level). In the ovary, expressed in primordial follicles and oocytes but not the external follicle cells (at protein level).

The protein resides in the nucleus. Its subcellular location is the cytoplasm. Inhibits PRC2/EED-EZH1 and PRC2/EED-EZH2 complex function by inhibiting EZH1/EZH2 methyltransferase activity, thereby causing down-regulation of histone H3 trimethylation on 'Lys-27' (H3K27me3). Probably inhibits methyltransferase activity by limiting the stimulatory effect of cofactors such as AEBP2 and JARID2. Inhibits H3K27me3 deposition during spermatogenesis and oogenesis. This Homo sapiens (Human) protein is EZH inhibitory protein.